We begin with the raw amino-acid sequence, 391 residues long: MAEESSCTRDCMSFSVLNWDQVSRLHEVLTEVVPIHGRGNFPTLEITLKDIVQTVRSRLEEAGIKVQDVRLNGSAAGHVLVKDNGLGCKDLDLIFHVALPTEAEFQLVRDVVLCSLLNFLPEGVNKLKISPVTLKEAYVQKLVKVCTDTDRWSLISLSNKNGKNVELKFVDSIRRQFEFSVDSFQIILDSLLFFYDCSNNPISEHFHPTVIGESMYGDFEEAFDHLQNRLIATKNPEEIRGGGLLKYSNLLVRDFRPTDQEEIETLERYMCSRFFIDFPDILEQQRKLETYLQNHFAEEERSKYDYLMILRRVVNESTVCLMGHERRQTLNLISLLALRVLAEQNIIPNATNVTCYYQPAPYVSDGNFSNYYVAHPPVTYSQPYPTWLPCN.

The protein belongs to the TENT family. In terms of assembly, interacts with BCCIP and PABPC1; the interaction has no effect on TENT5C poly(A) polymerase function. Interacts with PLK4; this interaction leads to the TENT5C recruitment into the centrosome.

Its subcellular location is the nucleus. The protein localises to the cytoplasm. The protein resides in the cytoskeleton. It localises to the microtubule organizing center. It is found in the centrosome. It catalyses the reaction RNA(n) + ATP = RNA(n)-3'-adenine ribonucleotide + diphosphate. Catalyzes the transfer of one adenosine molecule from an ATP to an mRNA poly(A) tail bearing a 3'-OH terminal group and enhances mRNA stability and gene expression. Can also elongate RNA oligos ending with uridine molecule, provided that the sequence is adenosine-rich. Mainly targets mRNAs encoding endoplasmic reticulum-targeted protein. In Macaca fascicularis (Crab-eating macaque), this protein is Terminal nucleotidyltransferase 5C.